Consider the following 80-residue polypeptide: Cell division protein ZapB (80 aa).

Residues 3 to 80 adopt a coiled-coil conformation; that stretch reads FEVFEKLEAK…ALLGKMNEVN (78 aa).

The protein belongs to the ZapB family. Homodimer. The ends of the coiled-coil dimer bind to each other, forming polymers. Interacts with FtsZ.

It is found in the cytoplasm. Functionally, non-essential, abundant cell division factor that is required for proper Z-ring formation. It is recruited early to the divisome by direct interaction with FtsZ, stimulating Z-ring assembly and thereby promoting cell division earlier in the cell cycle. Its recruitment to the Z-ring requires functional FtsA or ZipA. In Edwardsiella ictaluri (strain 93-146), this protein is Cell division protein ZapB.